A 520-amino-acid polypeptide reads, in one-letter code: Maturase K (520 aa).

This sequence belongs to the intron maturase 2 family. MatK subfamily.

The protein localises to the plastid. The protein resides in the chloroplast. Its function is as follows. Usually encoded in the trnK tRNA gene intron. Probably assists in splicing its own and other chloroplast group II introns. This is Maturase K from Linum perenne (Perennial flax).